The chain runs to 262 residues: MPAGVAAWRRDRRHAGTARPARCADTALFRTNPQLEKYEMNALLAGLTLLIIGDSHVTFKDSLLSVLPDEFTKQGAKVVTYGVCSSTAADWVVPNPNNGCGAAERVGDAPIGAPDMKPASPPPITSLIEKWHPNVVMVILGDTMAAYGQNAVSKDWVDEQVKTLTYAIGKTACIWVGPTWGQFSPRYGKTDQRATEMASFLKGEVAPCSYVDGTALLKQGSVNTIDGIHATPESYRVWGDAIVQATLPELEKLKDAPPAPAQ.

Its pathway is glycan metabolism; bacterial cellulose biosynthesis. The polypeptide is Protein BcsX (bcsX) (Komagataeibacter xylinus (Gluconacetobacter xylinus)).